The chain runs to 332 residues: Agamous-like MADS-box protein AGL66 (332 aa).

The 61-residue stretch at 1-61 (MGRVKLEIKR…DRLSLFSGKT (61 aa)) folds into the MADS-box domain. Residues 120–151 (TAINSDVEELEHEVYKLQQQLLMAEEELRKYE) are a coiled coil.

As to quaternary structure, forms a heterodimer with AGL30. In terms of tissue distribution, expressed in pollen.

It is found in the nucleus. Its function is as follows. Probable transcription factor that forms a heterodimer with the MADS-box protein AGL30 and is involved in the regulation of pollen maturation at the late stages of pollen development and pollen tube growth. The protein is Agamous-like MADS-box protein AGL66 of Arabidopsis thaliana (Mouse-ear cress).